Consider the following 299-residue polypeptide: Recombination-associated protein RdgC (299 aa).

It belongs to the RdgC family.

It localises to the cytoplasm. The protein localises to the nucleoid. Its function is as follows. May be involved in recombination. The chain is Recombination-associated protein RdgC from Bordetella parapertussis (strain 12822 / ATCC BAA-587 / NCTC 13253).